The following is a 363-amino-acid chain: MDNYTYSELLKSLQNKCDNIALIIKPEKIKQELERIEKEQEDPNFWQDVLKARDTNKEKVRLNRLLETYQKTKDSLDESVELFELAQNDNDEVTLSLLYEEAPTLEHSVQKVEIEIMLSGENDASNAIITIQPGAGGTESQDWASILYRMYLRWAERRGFKSEILDYQDGEEAGIKGVAFIIKGENAYGYLKNENGVHRLVRISPFDANAKRHTSFASVQISPELDDDIDIEIDEKDVRYDYYRASGAGGQHVNKTESAVRITHFPTGIVVQCQNDRSQHKNKASALKMLKSKLYELELEKQQNSTKNEEKSEIGWGHQIRSYVLAPYQQVKDARSNIAYSNVEAILDGDIDAILEGVLIAKA.

Residue Q251 is modified to N5-methylglutamine.

It belongs to the prokaryotic/mitochondrial release factor family. Methylated by PrmC. Methylation increases the termination efficiency of RF2.

It localises to the cytoplasm. Peptide chain release factor 2 directs the termination of translation in response to the peptide chain termination codons UGA and UAA. The polypeptide is Peptide chain release factor 2 (Helicobacter pylori (strain P12)).